Consider the following 118-residue polypeptide: UPF0102 protein DICTH_1420 (118 aa).

Belongs to the UPF0102 family.

The sequence is that of UPF0102 protein DICTH_1420 from Dictyoglomus thermophilum (strain ATCC 35947 / DSM 3960 / H-6-12).